The chain runs to 306 residues: GTP-binding protein RAD (306 aa).

Residues M1–R13 show a composition bias toward gly residues. A disordered region spans residues M1–Y91. An Omega-N-methylarginine modification is found at R23. A Phosphoserine modification is found at S25. Residues A56–D88 are compositionally biased toward low complexity. Residues G97–S104 and N201–D204 contribute to the GTP site. The segment at A276–A295 is calmodulin-binding.

This sequence belongs to the small GTPase superfamily. RGK family. In terms of assembly, interacts with Calmodulin preferentially in the inactive, GDP-bound form. Interacts with CAMK2D. Interacts with CACNB2; interaction may be involved in beta-adrenergic regulation of heart rate and contractile force. Interaction with CACNB2 regulates the trafficking of CACNA1C to the cell membrane.

Its subcellular location is the cell membrane. Functionally, may regulate basal voltage-dependent L-type Ca(2+) currents and be required for beta-adrenergic augmentation of Ca(2+) influx in cardiomyocytes, thereby regulating increases in heart rate and contractile force. May play an important role in cardiac antiarrhythmia via the strong suppression of voltage-dependent L-type Ca(2+) currents. Regulates voltage-gated L-type calcium channel subunit alpha-1C trafficking to the cell membrane. Inhibits cardiac hypertrophy through the calmodulin-dependent kinase II (CaMKII) pathway. Inhibits phosphorylation and activation of CAMK2D. The sequence is that of GTP-binding protein RAD (Rrad) from Rattus norvegicus (Rat).